A 131-amino-acid polypeptide reads, in one-letter code: Small ribosomal subunit protein uS9 (131 aa).

It belongs to the universal ribosomal protein uS9 family.

This is Small ribosomal subunit protein uS9 from Actinobacillus pleuropneumoniae serotype 7 (strain AP76).